The following is a 426-amino-acid chain: Histidine--tRNA ligase (426 aa).

It belongs to the class-II aminoacyl-tRNA synthetase family.

It is found in the cytoplasm. The enzyme catalyses tRNA(His) + L-histidine + ATP = L-histidyl-tRNA(His) + AMP + diphosphate + H(+). In Saccharolobus solfataricus (strain ATCC 35092 / DSM 1617 / JCM 11322 / P2) (Sulfolobus solfataricus), this protein is Histidine--tRNA ligase.